We begin with the raw amino-acid sequence, 450 residues long: UDP-N-acetylmuramoylalanine--D-glutamate ligase (450 aa).

119 to 125 (GSNGKTT) provides a ligand contact to ATP.

This sequence belongs to the MurCDEF family.

Its subcellular location is the cytoplasm. The catalysed reaction is UDP-N-acetyl-alpha-D-muramoyl-L-alanine + D-glutamate + ATP = UDP-N-acetyl-alpha-D-muramoyl-L-alanyl-D-glutamate + ADP + phosphate + H(+). It functions in the pathway cell wall biogenesis; peptidoglycan biosynthesis. Cell wall formation. Catalyzes the addition of glutamate to the nucleotide precursor UDP-N-acetylmuramoyl-L-alanine (UMA). The sequence is that of UDP-N-acetylmuramoylalanine--D-glutamate ligase from Bacillus mycoides (strain KBAB4) (Bacillus weihenstephanensis).